The following is a 909-amino-acid chain: GTPase activating protein homolog 4 (909 aa).

The F-BAR domain maps to 1-257 (MASLIGSAKL…PTPDFQFESC (257 aa)). The region spanning 322–513 (IPIEEIMFKQ…LIIEGYLKLS (192 aa)) is the Rho-GAP domain. The tract at residues 529–909 (IPSFSNNNNN…QRVPPPPSQS (381 aa)) is disordered. 2 stretches are compositionally biased toward low complexity: residues 533-562 (SNNN…ITTN) and 571-602 (SSTT…TPQQ). The segment covering 609 to 625 (SYQPPQPPPTMAPPPLF) has biased composition (pro residues). The span at 651–674 (QYTQSSSNLPPIQLGVTNSPSKPQ) shows a compositional bias: polar residues. Residues 672–809 (KPQLSDKQKE…QQLQQQSNGS (138 aa)) are a coiled coil. Positions 675-716 (LSDKQKEKEKEKEKEKEKEKEREKEKEKEKEKEKEKEKEKEK) are enriched in basic and acidic residues. Low complexity predominate over residues 723-741 (SSSTSPNSSSLSISNFLSS). Positions 742-765 (NKDKDKEKDKEKEKEKEKEKDKEI) are enriched in basic and acidic residues. Over residues 767–785 (ATNSTPEKPVSNRMSLIFS) the composition is skewed to polar residues. Composition is skewed to low complexity over residues 786 to 828 (QQLQ…MSPS) and 843 to 892 (SGTS…ELKS).

It localises to the cytoplasm. It is found in the contractile vacuole. Functionally, rho GTPase-activating protein involved in the signal transduction pathway. This is GTPase activating protein homolog 4 (mgp4) from Dictyostelium discoideum (Social amoeba).